We begin with the raw amino-acid sequence, 251 residues long: Cell division protein ZapD (251 aa).

Belongs to the ZapD family. Interacts with FtsZ.

Its subcellular location is the cytoplasm. Its function is as follows. Cell division factor that enhances FtsZ-ring assembly. Directly interacts with FtsZ and promotes bundling of FtsZ protofilaments, with a reduction in FtsZ GTPase activity. This is Cell division protein ZapD from Burkholderia vietnamiensis (strain G4 / LMG 22486) (Burkholderia cepacia (strain R1808)).